The chain runs to 225 residues: UPF0173 metal-dependent hydrolase Tneu_1348 (225 aa).

It belongs to the UPF0173 family.

In Pyrobaculum neutrophilum (strain DSM 2338 / JCM 9278 / NBRC 100436 / V24Sta) (Thermoproteus neutrophilus), this protein is UPF0173 metal-dependent hydrolase Tneu_1348.